Consider the following 501-residue polypeptide: Ribose import ATP-binding protein RbsA (501 aa).

2 ABC transporter domains span residues 8-245 and 255-500; these read LKMV…VGRT and VKKG…VGIN. 40 to 47 lines the ATP pocket; sequence GENGAGKS.

This sequence belongs to the ABC transporter superfamily. Ribose importer (TC 3.A.1.2.1) family. As to quaternary structure, the complex is composed of an ATP-binding protein (RbsA), two transmembrane proteins (RbsC) and a solute-binding protein (RbsB).

The protein localises to the cell membrane. The enzyme catalyses D-ribose(out) + ATP + H2O = D-ribose(in) + ADP + phosphate + H(+). Its function is as follows. Part of the ABC transporter complex RbsABC involved in ribose import. Responsible for energy coupling to the transport system. The chain is Ribose import ATP-binding protein RbsA from Clostridium perfringens (strain SM101 / Type A).